Consider the following 192-residue polypeptide: uncharacterized protein (192 aa).

The protein resides in the virion. This is an uncharacterized protein from Acanthamoeba polyphaga mimivirus (APMV).